The sequence spans 401 residues: Multidrug resistance protein MdtH (401 aa).

Transmembrane regions (helical) follow at residues 13 to 33 (YFLL…FPLI), 34 to 54 (SIRF…ALGL), 99 to 116 (PWIL…GTLF), 139 to 159 (LLMM…SWLL), 165 to 185 (FVCW…VWLL), 214 to 234 (VLTL…LPIV), 243 to 263 (AAVK…LYPI), 277 to 297 (LMFG…ITHL), 299 to 319 (TLFM…PARE), 340 to 360 (LGLA…YDTG), and 368 to 388 (LPWF…YWQF).

It belongs to the major facilitator superfamily. DHA1 family. MdtH (TC 2.A.1.2.21) subfamily.

Its subcellular location is the cell inner membrane. The sequence is that of Multidrug resistance protein MdtH from Yersinia enterocolitica serotype O:8 / biotype 1B (strain NCTC 13174 / 8081).